The sequence spans 237 residues: tRNA (guanine-N(7)-)-methyltransferase (237 aa).

S-adenosyl-L-methionine contacts are provided by aspartate 35, glutamate 60, asparagine 87, and aspartate 113. Aspartate 113 is a catalytic residue. Substrate contacts are provided by lysine 117 and aspartate 149.

It belongs to the class I-like SAM-binding methyltransferase superfamily. TrmB family.

It carries out the reaction guanosine(46) in tRNA + S-adenosyl-L-methionine = N(7)-methylguanosine(46) in tRNA + S-adenosyl-L-homocysteine. Its pathway is tRNA modification; N(7)-methylguanine-tRNA biosynthesis. Its function is as follows. Catalyzes the formation of N(7)-methylguanine at position 46 (m7G46) in tRNA. This is tRNA (guanine-N(7)-)-methyltransferase from Synechococcus sp. (strain WH7803).